The chain runs to 450 residues: Exodeoxyribonuclease 7 large subunit (450 aa).

The protein belongs to the XseA family. In terms of assembly, heterooligomer composed of large and small subunits.

It localises to the cytoplasm. The enzyme catalyses Exonucleolytic cleavage in either 5'- to 3'- or 3'- to 5'-direction to yield nucleoside 5'-phosphates.. In terms of biological role, bidirectionally degrades single-stranded DNA into large acid-insoluble oligonucleotides, which are then degraded further into small acid-soluble oligonucleotides. This chain is Exodeoxyribonuclease 7 large subunit, found in Listeria innocua serovar 6a (strain ATCC BAA-680 / CLIP 11262).